The chain runs to 1119 residues: uncharacterized protein (1119 aa).

A signal peptide spans 1 to 21 (MNNIYISLYIFFISYIIQLCF). Residues 170-206 (NKKKLDKEKKKNVIELKEYLEDLKKRMFDMQKRLNDI) are a coiled coil. Disordered regions lie at residues 606 to 627 (NNNT…IFNN) and 782 to 905 (ASVQ…EHDE). A compositionally biased stretch (basic and acidic residues) spans 788–891 (DKGEDNNDND…EKDKSRDDNK (104 aa)). Residues 890–920 (NKAQNNNSTDNEEHDEITEQIGFLKNHNQKY) are a coiled coil.

This is an uncharacterized protein from Plasmodium falciparum (isolate 3D7).